We begin with the raw amino-acid sequence, 122 residues long: Ribonuclease P protein component (122 aa).

Belongs to the RnpA family. As to quaternary structure, consists of a catalytic RNA component (M1 or rnpB) and a protein subunit.

It carries out the reaction Endonucleolytic cleavage of RNA, removing 5'-extranucleotides from tRNA precursor.. Functionally, RNaseP catalyzes the removal of the 5'-leader sequence from pre-tRNA to produce the mature 5'-terminus. It can also cleave other RNA substrates such as 4.5S RNA. The protein component plays an auxiliary but essential role in vivo by binding to the 5'-leader sequence and broadening the substrate specificity of the ribozyme. In Lactobacillus johnsonii (strain CNCM I-12250 / La1 / NCC 533), this protein is Ribonuclease P protein component.